The primary structure comprises 444 residues: Transposase for insertion sequence element IS1557 (444 aa).

The tract at residues 273-292 (PKWGRGRPGKNAAPRPGRER) is disordered.

The protein belongs to the transposase 12 family.

The polypeptide is Transposase for insertion sequence element IS1557 (Mycobacterium tuberculosis (strain CDC 1551 / Oshkosh)).